A 334-amino-acid polypeptide reads, in one-letter code: Glycerol-3-phosphate dehydrogenase [NAD(P)+] (334 aa).

NADPH contacts are provided by S10, W11, H31, R32, and K105. Residues K105, G136, and S138 each coordinate sn-glycerol 3-phosphate. An NADPH-binding site is contributed by A140. Sn-glycerol 3-phosphate-binding residues include K191, D244, S254, R255, and N256. The active-site Proton acceptor is K191. R255 contacts NADPH. V279 and E281 together coordinate NADPH.

The protein belongs to the NAD-dependent glycerol-3-phosphate dehydrogenase family.

The protein resides in the cytoplasm. It carries out the reaction sn-glycerol 3-phosphate + NAD(+) = dihydroxyacetone phosphate + NADH + H(+). The catalysed reaction is sn-glycerol 3-phosphate + NADP(+) = dihydroxyacetone phosphate + NADPH + H(+). It functions in the pathway membrane lipid metabolism; glycerophospholipid metabolism. Catalyzes the reduction of the glycolytic intermediate dihydroxyacetone phosphate (DHAP) to sn-glycerol 3-phosphate (G3P), the key precursor for phospholipid synthesis. This Chlorobium phaeobacteroides (strain BS1) protein is Glycerol-3-phosphate dehydrogenase [NAD(P)+].